A 425-amino-acid polypeptide reads, in one-letter code: MLQHLRNRASIEVLGKAIRKYNVPESANQLLIDMGFIQPSMPGIFQYLPLGLRVQNKICDLLHISMRSLGASAISLAHLSSKEIWEKSGRWQKTGSELFRLHDRNDREMCLAPTHEEDVTRTMATIIDSQKQLPIRVYQIGRKFRDELRPRGGLLRGREFMMKDLYTFDIDKASAMKTYEDVLQAYHTFFKEVGLPFVMVKAATGNIGGNLSHEFHYRHPVGEDVIYTCPSCHYSTNSEMLDLSKTSSDISCPNCNDQLTSTTAIEVGHAFYLGKIYSSKFNATVEVKNKQEVLHMGCYGIGVSRLIAAVAHVTKDAKGLVWPSSIAPWKVLVVPTSDNHIQSAETVYDATANVVGFDNVLLEDRQNRAFGYKMRDAELIGYPFVIVVGSRFQEEGICEIIVRSSGERYKLDKDSLHQVLLGNFL.

This sequence belongs to the class-II aminoacyl-tRNA synthetase family.

It is found in the mitochondrion. It carries out the reaction tRNA(Pro) + L-proline + ATP = L-prolyl-tRNA(Pro) + AMP + diphosphate. The polypeptide is Probable proline--tRNA ligase, mitochondrial (Schizosaccharomyces pombe (strain 972 / ATCC 24843) (Fission yeast)).